The following is a 641-amino-acid chain: Probable serine protease FE772_23065 (641 aa).

A helical membrane pass occupies residues 532–552 (WVELIAILAAAGWIRVMLIGL).

It belongs to the peptidase S1 family.

It is found in the cell inner membrane. In terms of biological role, possibly a dedicated protease for substrate gasdermin bGSDM; cleaves the bGSDM precursor, releasing the pore-forming moiety, which integrates into the membrane and triggers cell death. Involved in defense against bacteriophages. When this probable 4 gene operon (bGSDM-FE772_23060-FE772_23065-FE772_23070) is inserted into E.coli it provides nearly 100-fold protection against phages T5 and T6 and about 8-fold against phage T4. The operon without bGSDM no longer protects against phage. This Lysobacter enzymogenes protein is Probable serine protease FE772_23065.